Reading from the N-terminus, the 259-residue chain is Global transcriptional regulator CodY (259 aa).

Positions 1–155 (MELLAKTRKL…SATVVGMEIL (155 aa)) are GAF domain. A DNA-binding region (H-T-H motif) is located at residues 203-222 (ASKIADRVGITRSVIVNALR). Ser215 is modified (phosphoserine).

The protein belongs to the CodY family.

The protein resides in the cytoplasm. Its function is as follows. DNA-binding global transcriptional regulator which is involved in the adaptive response to starvation and acts by directly or indirectly controlling the expression of numerous genes in response to nutrient availability. During rapid exponential growth, CodY is highly active and represses genes whose products allow adaptation to nutrient depletion. This Bacillus cytotoxicus (strain DSM 22905 / CIP 110041 / 391-98 / NVH 391-98) protein is Global transcriptional regulator CodY.